A 47-amino-acid chain; its full sequence is Large ribosomal subunit protein bL34 (47 aa).

It belongs to the bacterial ribosomal protein bL34 family.

This Rhodococcus opacus (strain B4) protein is Large ribosomal subunit protein bL34.